Here is a 737-residue protein sequence, read N- to C-terminus: Catalase-peroxidase (737 aa).

Positions 102-225 (WHSAGTYRTG…LGAVQMGLIY (124 aa)) form a cross-link, tryptophyl-tyrosyl-methioninium (Trp-Tyr) (with M-251). His-103 serves as the catalytic Proton acceptor. Residues 225–251 (YVNPEGPNGKPDPLAAAHDIRETFARM) constitute a cross-link (tryptophyl-tyrosyl-methioninium (Tyr-Met) (with W-102)). Heme b is bound at residue His-266.

The protein belongs to the peroxidase family. Peroxidase/catalase subfamily. As to quaternary structure, homodimer or homotetramer. Heme b serves as cofactor. In terms of processing, formation of the three residue Trp-Tyr-Met cross-link is important for the catalase, but not the peroxidase activity of the enzyme.

It carries out the reaction H2O2 + AH2 = A + 2 H2O. The enzyme catalyses 2 H2O2 = O2 + 2 H2O. In terms of biological role, bifunctional enzyme with both catalase and broad-spectrum peroxidase activity. The polypeptide is Catalase-peroxidase (Caulobacter sp. (strain K31)).